The sequence spans 254 residues: Ribonuclease HII (254 aa).

Residues 67 to 254 (IVIAGVDEVG…HRMSFLKNII (188 aa)) enclose the RNase H type-2 domain. A divalent metal cation-binding residues include D73, E74, and D170.

Belongs to the RNase HII family. It depends on Mn(2+) as a cofactor. Requires Mg(2+) as cofactor.

The protein resides in the cytoplasm. The enzyme catalyses Endonucleolytic cleavage to 5'-phosphomonoester.. Endonuclease that specifically degrades the RNA of RNA-DNA hybrids. This Clostridium acetobutylicum (strain ATCC 824 / DSM 792 / JCM 1419 / IAM 19013 / LMG 5710 / NBRC 13948 / NRRL B-527 / VKM B-1787 / 2291 / W) protein is Ribonuclease HII.